Reading from the N-terminus, the 488-residue chain is Glutamyl-tRNA(Gln) amidotransferase subunit A (488 aa).

Catalysis depends on charge relay system residues K77 and S152. S176 serves as the catalytic Acyl-ester intermediate.

This sequence belongs to the amidase family. GatA subfamily. As to quaternary structure, heterotrimer of A, B and C subunits.

It carries out the reaction L-glutamyl-tRNA(Gln) + L-glutamine + ATP + H2O = L-glutaminyl-tRNA(Gln) + L-glutamate + ADP + phosphate + H(+). Functionally, allows the formation of correctly charged Gln-tRNA(Gln) through the transamidation of misacylated Glu-tRNA(Gln) in organisms which lack glutaminyl-tRNA synthetase. The reaction takes place in the presence of glutamine and ATP through an activated gamma-phospho-Glu-tRNA(Gln). This chain is Glutamyl-tRNA(Gln) amidotransferase subunit A, found in Streptococcus pyogenes serotype M18 (strain MGAS8232).